The chain runs to 298 residues: HTH-type transcriptional regulator ArgP (298 aa).

An HTH lysR-type domain is found at 4–60 (LDYKWIEALDAVVAQGGFERAAEELYISQSAVSQRIKQLERFLAQSVLIREQPPKPT). The segment at residues 21-40 (FERAAEELYISQSAVSQRIK) is a DNA-binding region (H-T-H motif).

This sequence belongs to the LysR transcriptional regulatory family. As to quaternary structure, homodimer.

Its function is as follows. Controls the transcription of genes involved in arginine and lysine metabolism. The protein is HTH-type transcriptional regulator ArgP of Vibrio vulnificus (strain YJ016).